Reading from the N-terminus, the 200-residue chain is Small ribosomal subunit protein uS4 (200 aa).

The segment at 20–41 is disordered; sequence SGTGKELEKRPYAPGQHGPNQR. In terms of domain architecture, S4 RNA-binding spans 92-155; the sequence is ARLDAVVYSL…LKLDIIAESV (64 aa).

This sequence belongs to the universal ribosomal protein uS4 family. In terms of assembly, part of the 30S ribosomal subunit. Contacts protein S5. The interaction surface between S4 and S5 is involved in control of translational fidelity.

In terms of biological role, one of the primary rRNA binding proteins, it binds directly to 16S rRNA where it nucleates assembly of the body of the 30S subunit. With S5 and S12 plays an important role in translational accuracy. This chain is Small ribosomal subunit protein uS4, found in Staphylococcus saprophyticus subsp. saprophyticus (strain ATCC 15305 / DSM 20229 / NCIMB 8711 / NCTC 7292 / S-41).